Reading from the N-terminus, the 282-residue chain is Probable endonuclease 4 (282 aa).

Residues His69, His109, Glu144, Asp178, His181, His215, Asp228, His230, and Glu260 each coordinate Zn(2+).

Belongs to the AP endonuclease 2 family. The cofactor is Zn(2+).

The enzyme catalyses Endonucleolytic cleavage to 5'-phosphooligonucleotide end-products.. Its function is as follows. Endonuclease IV plays a role in DNA repair. It cleaves phosphodiester bonds at apurinic or apyrimidinic (AP) sites, generating a 3'-hydroxyl group and a 5'-terminal sugar phosphate. The polypeptide is Probable endonuclease 4 (Thermosipho africanus (strain TCF52B)).